The following is a 381-amino-acid chain: Succinyl-diaminopimelate desuccinylase (381 aa).

H71 is a Zn(2+) binding site. Residue D73 is part of the active site. D104 serves as a coordination point for Zn(2+). The active-site Proton acceptor is the E138. Zn(2+) contacts are provided by E139, E167, and H353.

It belongs to the peptidase M20A family. DapE subfamily. As to quaternary structure, homodimer. Zn(2+) is required as a cofactor. Co(2+) serves as cofactor.

It catalyses the reaction N-succinyl-(2S,6S)-2,6-diaminopimelate + H2O = (2S,6S)-2,6-diaminopimelate + succinate. It participates in amino-acid biosynthesis; L-lysine biosynthesis via DAP pathway; LL-2,6-diaminopimelate from (S)-tetrahydrodipicolinate (succinylase route): step 3/3. In terms of biological role, catalyzes the hydrolysis of N-succinyl-L,L-diaminopimelic acid (SDAP), forming succinate and LL-2,6-diaminopimelate (DAP), an intermediate involved in the bacterial biosynthesis of lysine and meso-diaminopimelic acid, an essential component of bacterial cell walls. The protein is Succinyl-diaminopimelate desuccinylase of Shewanella halifaxensis (strain HAW-EB4).